Consider the following 294-residue polypeptide: 1D-myo-inositol 2-acetamido-2-deoxy-alpha-D-glucopyranoside deacetylase (294 aa).

His13, Asp16, and His148 together coordinate Zn(2+).

It belongs to the MshB deacetylase family. Zn(2+) serves as cofactor.

It catalyses the reaction 1D-myo-inositol 2-acetamido-2-deoxy-alpha-D-glucopyranoside + H2O = 1D-myo-inositol 2-amino-2-deoxy-alpha-D-glucopyranoside + acetate. Its function is as follows. Catalyzes the deacetylation of 1D-myo-inositol 2-acetamido-2-deoxy-alpha-D-glucopyranoside (GlcNAc-Ins) in the mycothiol biosynthesis pathway. This is 1D-myo-inositol 2-acetamido-2-deoxy-alpha-D-glucopyranoside deacetylase from Geodermatophilus obscurus (strain ATCC 25078 / DSM 43160 / JCM 3152 / CCUG 61914 / KCC A-0152 / KCTC 9177 / NBRC 13315 / NRRL B-3577 / G-20).